Consider the following 141-residue polypeptide: Protein wingless (141 aa).

A lipid anchor (O-palmitoleoyl serine; by PORCN) is attached at Ser3. Residues Thr40–Asn49 show a composition bias toward polar residues. Residues Thr40 to Arg61 are disordered. Residues Cys107 and Cys122 are joined by a disulfide bond. 2 N-linked (GlcNAc...) asparagine glycosylation sites follow: Asn108 and Asn138.

The protein belongs to the Wnt family. Post-translationally, palmitoleoylated by porcupine. The lipid group functions as a sorting signal, targeting the ligand to polarized vesicles that transport wg to unique sites at the cell surface. Depalmitoleoylated by notum, leading to inhibit Wnt signaling pathway.

It localises to the secreted. It is found in the extracellular space. The protein localises to the extracellular matrix. In terms of biological role, segment polarity protein. Binds to the frizzled seven-transmembrane receptors. This protein is probably a growth factor. In Manduca sexta (Tobacco hawkmoth), this protein is Protein wingless (WG).